Reading from the N-terminus, the 43-residue chain is Defensin-B (43 aa).

Disulfide bonds link Cys-3/Cys-34, Cys-20/Cys-39, and Cys-24/Cys-41.

Its subcellular location is the secreted. Its function is as follows. Antibacterial protein. Strong activity against the Gram-positive bacteria M.luteus, B.megaterium and S.aureus. Reduced activity against Gram-positive bacterium B.subtilis and weak activity against Gram-negative bacterium X.japonicus. No detectable activity against the Gram-negative bacteria E.asbriae, E.coli, P.aeruginosa and S.marcescens. This Anomala cuprea (Cupreous chafer beetle) protein is Defensin-B.